Reading from the N-terminus, the 258-residue chain is Probable N-acetylglucosaminyl-phosphatidylinositol de-N-acetylase (258 aa).

The tract at residues 147–170 (KSSSTTTTSTTSSSSSSSSLSNRT) is disordered. A compositionally biased stretch (low complexity) spans 148–170 (SSSTTTTSTTSSSSSSSSLSNRT).

The protein belongs to the PIGL family.

Its subcellular location is the endoplasmic reticulum membrane. The catalysed reaction is a 6-(N-acetyl-alpha-D-glucosaminyl)-1-(1,2-diacyl-sn-glycero-3-phospho)-1D-myo-inositol + H2O = a 6-(alpha-D-glucosaminyl)-1-(1,2-diacyl-sn-glycero-3-phospho)-1D-myo-inositol + acetate. It functions in the pathway glycolipid biosynthesis; glycosylphosphatidylinositol-anchor biosynthesis. Functionally, involved in the second step of GPI biosynthesis. De-N-acetylation of N-acetylglucosaminyl-phosphatidylinositol. This chain is Probable N-acetylglucosaminyl-phosphatidylinositol de-N-acetylase (pigl), found in Dictyostelium discoideum (Social amoeba).